The primary structure comprises 75 residues: UPF0235 protein MSMEG_3845 (75 aa).

It belongs to the UPF0235 family.

This chain is UPF0235 protein MSMEG_3845, found in Mycolicibacterium smegmatis (strain ATCC 700084 / mc(2)155) (Mycobacterium smegmatis).